The following is a 1040-amino-acid chain: Multidrug resistance protein MdtB (1040 aa).

12 consecutive transmembrane segments (helical) span residues 25 to 45 (LLMA…PVAA), 347 to 367 (LMLA…NIPA), 369 to 389 (IIPG…MVFL), 396 to 416 (LTLM…IVVI), 440 to 460 (IGFT…PLLF), 472 to 492 (FAVT…TLTP), 537 to 557 (WLTL…WIVI), 863 to 883 (LGST…VLGV), 888 to 908 (FIHP…ALLA), 910 to 930 (IIAG…LIGI), 968 to 988 (ILMT…STGV), and 998 to 1018 (IAMV…TPVI).

It belongs to the resistance-nodulation-cell division (RND) (TC 2.A.6) family. MdtB subfamily. In terms of assembly, part of a tripartite efflux system composed of MdtA, MdtB and MdtC. MdtB forms a heteromultimer with MdtC.

It localises to the cell inner membrane. This is Multidrug resistance protein MdtB from Salmonella schwarzengrund (strain CVM19633).